Consider the following 228-residue polypeptide: 7-cyano-7-deazaguanine synthase (228 aa).

9–19 (LSGGPDSTTVL) contacts ATP. Zn(2+)-binding residues include Cys193, Cys203, Cys206, and Cys209.

It belongs to the QueC family. The cofactor is Zn(2+).

The enzyme catalyses 7-carboxy-7-deazaguanine + NH4(+) + ATP = 7-cyano-7-deazaguanine + ADP + phosphate + H2O + H(+). It functions in the pathway purine metabolism; 7-cyano-7-deazaguanine biosynthesis. Functionally, catalyzes the ATP-dependent conversion of 7-carboxy-7-deazaguanine (CDG) to 7-cyano-7-deazaguanine (preQ(0)). The protein is 7-cyano-7-deazaguanine synthase of Rickettsia massiliae (strain Mtu5).